An 885-amino-acid polypeptide reads, in one-letter code: MPGKEAAGDVMKSSTKSNTKKMVQARLPFKRLNPVPKDEGCLEEKKIRIPQNVSPQKMLYSLNSSMEDMENDCEMETEMTPIPKAINGKGPLDNYIRKAPKASNAPSIITIDLTEDSNISTSNDSPLNGESRAQLANGTVSPERSTTNAPLSTNEECTVSVDNKSLENMSFPELELDKPHQSAASCTSVSNFSPERAVKEDYNSSADDDSVSVSSSSSPVSLSSPDVQTGSKFTNGSSPSTSTTPTGKATSNKTSAEKKKTKDKAEKRQAEKEERECARREARAAKDLAKKKREGEREQREKDKKEKKEREDREKAEKNRLKEEKKKEKLEALEAKQEEKRKKEEEKRQKEEEKRLKEEEKRIKAEKAEITRFLQKPKTPQAPKTFARSCGKFAPFEIKKGMALAPLCRIDFEQEASEELDIFLQEQTSESSFLDEIKKRRPRKMGQTTVPTINSVEVDDVQVLGETDPVLGSNMVLEEHIKDIGVPERKKFGRMKLLQFCENHRPAYWGTSNKRSRVINPRKPWAQDTDMLDYEVDSDEEWEEEEPGESLSHSEGENEDDDPKEEEDEDDDGFFVPHGYLSNDEGVSDEECTDPENQKVRQKLKAKEWDDLQSNSKKIRVLQPVVIGCVWCDSKASEIRLLQKFSACILESPAVEEELTQDISSAQKIKDRQILSKLVPLLHGNVNGSKIIIQEFQECCRRGLFLEDNASHATDIESTSPNSTPQTPSNIIVPSKARLKRLISENSVYEKRPEHRMCWYVHSDVLKGLQQDNLPVPCQWTYITQVNSVSKENNGANGGSLQSLPLSGKRKSAGSMPITKFMKRARDLETAVNTDMDGFQADTEEEEDDDDCMIIEDQQAKDAEDSTIECKINLNDSAILASCQN.

Disordered regions lie at residues 1–24 (MPGKEAAGDVMKSSTKSNTKKMVQ), 115–157 (EDSN…NEEC), 176–361 (LDKP…EEEK), and 536–605 (VDSD…QKLK). The segment covering 12 to 21 (KSSTKSNTKK) has biased composition (low complexity). 3 stretches are compositionally biased toward polar residues: residues 116–128 (DSNISTSNDSPLN), 134–157 (QLANGTVSPERSTTNAPLSTNEEC), and 182–193 (SAASCTSVSNFS). Composition is skewed to low complexity over residues 211-227 (VSVSSSSSPVSLSSPDV) and 237-254 (SSPSTSTTPTGKATSNKT). Residues 251 to 376 (SNKTSAEKKK…KAEITRFLQK (126 aa)) adopt a coiled-coil conformation. The segment covering 255–361 (SAEKKKTKDK…EEKRLKEEEK (107 aa)) has biased composition (basic and acidic residues). 2 stretches are compositionally biased toward acidic residues: residues 536-548 (VDSDEEWEEEEPG) and 557-573 (ENEDDDPKEEEDEDDDG). Residues 629-665 (CVWCDSKASEIRLLQKFSACILESPAVEEELTQDISS) form a necessary for homodimerization, competence for chromatin assembly region.

Belongs to the CHAF1A family. Homodimer.

It is found in the nucleus. In terms of biological role, involved in chromatin assembly in DNA replication and DNA repair. This Xenopus laevis (African clawed frog) protein is Chromatin assembly factor 1 subunit A-B (chaf1a-b).